The chain runs to 391 residues: Squalene synthase 8 (391 aa).

This sequence belongs to the phytoene/squalene synthase family. It depends on Mg(2+) as a cofactor. Mn(2+) is required as a cofactor.

The protein resides in the endoplasmic reticulum. The enzyme catalyses 2 (2E,6E)-farnesyl diphosphate + NADH + H(+) = squalene + 2 diphosphate + NAD(+). It catalyses the reaction 2 (2E,6E)-farnesyl diphosphate + NADPH + H(+) = squalene + 2 diphosphate + NADP(+). Its pathway is terpene metabolism; lanosterol biosynthesis; lanosterol from farnesyl diphosphate: step 1/3. Its function is as follows. Component of the triterpene saponins (e.g. ginsenosides or panaxosides) and phytosterols biosynthetic pathways. Catalyzes the biosynthesis of squalene. In Panax ginseng (Korean ginseng), this protein is Squalene synthase 8.